The following is a 310-amino-acid chain: MGFRHKDIIALKDLTKEEITLLLDTADSLSEINRRDIKKVPTLRGKTVINLFYEASTRTRTSFEIAAKRLSADAVNITASTSSVVKGETLSDTANNLLAMKPDIIVMRHAVSGAHEYLAKRVSCSVINAGDGAHEHPSQGLLDMLTMRQKFGKLDGLKVAIIGDITHSRVARSDIYGLTTMGSHVFLAGPPTMMPVGIERLGNVTVCKDMREAVDKADVVMMLRIQLERQGKTLLPSMREYSRYFGLNPEVLGLAKKNAIVMHPGPINRGVELASSVADCDQSAILAQVENGVAVRMAMLYHVCGGEPVE.

R58 and T59 together coordinate carbamoyl phosphate. K86 is a binding site for L-aspartate. Residues R108, H136, and Q139 each contribute to the carbamoyl phosphate site. L-aspartate is bound by residues R169 and R224. 2 residues coordinate carbamoyl phosphate: G265 and P266.

It belongs to the aspartate/ornithine carbamoyltransferase superfamily. ATCase family. Heterododecamer (2C3:3R2) of six catalytic PyrB chains organized as two trimers (C3), and six regulatory PyrI chains organized as three dimers (R2).

It carries out the reaction carbamoyl phosphate + L-aspartate = N-carbamoyl-L-aspartate + phosphate + H(+). The protein operates within pyrimidine metabolism; UMP biosynthesis via de novo pathway; (S)-dihydroorotate from bicarbonate: step 2/3. In terms of biological role, catalyzes the condensation of carbamoyl phosphate and aspartate to form carbamoyl aspartate and inorganic phosphate, the committed step in the de novo pyrimidine nucleotide biosynthesis pathway. The chain is Aspartate carbamoyltransferase catalytic subunit from Geobacter sp. (strain M21).